We begin with the raw amino-acid sequence, 147 residues long: uncharacterized protein (147 aa).

An HTH LytTR-type domain is found at 44-147 (LVGYIDKEIH…LKSIKERLSI (104 aa)).

Its subcellular location is the cytoplasm. This is an uncharacterized protein from Staphylococcus aureus (strain MW2).